A 321-amino-acid chain; its full sequence is Probable cell division protein WhiA (321 aa).

Positions 276–309 (NLKELGELLEPPVGKSGVNHRLRKLEKIAEQLHQ) form a DNA-binding region, H-T-H motif.

Belongs to the WhiA family.

Involved in cell division and chromosome segregation. The sequence is that of Probable cell division protein WhiA from Natranaerobius thermophilus (strain ATCC BAA-1301 / DSM 18059 / JW/NM-WN-LF).